Consider the following 359-residue polypeptide: Phosphate acyltransferase (359 aa).

The tract at residues 338 to 359 is disordered; sequence AGGVQSAPETEAPGAHPSPHVA.

It belongs to the PlsX family. As to quaternary structure, homodimer. Probably interacts with PlsY.

The protein resides in the cytoplasm. It catalyses the reaction a fatty acyl-[ACP] + phosphate = an acyl phosphate + holo-[ACP]. The protein operates within lipid metabolism; phospholipid metabolism. Its function is as follows. Catalyzes the reversible formation of acyl-phosphate (acyl-PO(4)) from acyl-[acyl-carrier-protein] (acyl-ACP). This enzyme utilizes acyl-ACP as fatty acyl donor, but not acyl-CoA. This chain is Phosphate acyltransferase, found in Cupriavidus taiwanensis (strain DSM 17343 / BCRC 17206 / CCUG 44338 / CIP 107171 / LMG 19424 / R1) (Ralstonia taiwanensis (strain LMG 19424)).